A 332-amino-acid chain; its full sequence is C4-dicarboxylate-binding periplasmic protein DctP (332 aa).

The first 22 residues, 1 to 22, serve as a signal peptide directing secretion; that stretch reads MFKPLTLIAASILAVTSFNAAA.

It belongs to the bacterial solute-binding protein 7 family. The complex comprises the extracytoplasmic solute receptor protein DctP, and the two transmembrane proteins DctQ and DctM.

It localises to the periplasm. Part of the tripartite ATP-independent periplasmic (TRAP) transport system DctPQM involved in C4-dicarboxylates uptake. This Vibrio cholerae serotype O1 (strain ATCC 39315 / El Tor Inaba N16961) protein is C4-dicarboxylate-binding periplasmic protein DctP.